Reading from the N-terminus, the 546-residue chain is Phosphatidylinositol 4-phosphate 5-kinase type-1 alpha (546 aa).

In terms of domain architecture, PIPK spans T65–V433. K87 participates in a covalent cross-link: Glycyl lysine isopeptide (Lys-Gly) (interchain with G-Cter in ubiquitin). The disordered stretch occupies residues P441–G522. Positions S449–G461 are enriched in low complexity. The span at N462–A471 shows a compositional bias: polar residues. Residues G473–R493 are compositionally biased toward basic and acidic residues.

As to quaternary structure, interacts with RAC1. Interacts with TUT1. Forms a complex with CDH1/E-cadherin, CTNNB1/beta-catenin and CTNND1 at the plasma membrane upon calcium stimulation. Found in a ternary complex with IRS1 and DGKZ in the absence of insulin stimulation. Interacts with DGKZ. Interacts with PIP4K2C; the interaction inhibits PIP5K1A kinase activity.

The protein resides in the cell membrane. It is found in the cytoplasm. The protein localises to the nucleus. It localises to the nucleus speckle. Its subcellular location is the cell projection. The protein resides in the ruffle. It is found in the lamellipodium. The catalysed reaction is a 1,2-diacyl-sn-glycero-3-phospho-(1D-myo-inositol 4-phosphate) + ATP = a 1,2-diacyl-sn-glycero-3-phospho-(1D-myo-inositol-4,5-bisphosphate) + ADP + H(+). The enzyme catalyses 1-octadecanoyl-2-(5Z,8Z,11Z,14Z)-eicosatetraenoyl-sn-glycero-3-phospho-1D-myo-inositol 4-phosphate + ATP = 1-octadecanoyl-2-(5Z,8Z,11Z,14Z)-eicosatetraenoyl-sn-glycero-3-phospho-1D-myo-inositol 4,5-bisphosphate + ADP + H(+). It catalyses the reaction 1,2-dihexadecanoyl-sn-glycero-3-phospho-(1D-myo-inositol-4-phosphate) + ATP = 1,2-dihexadecanoyl-sn-glycero-3-phospho-(1D-myo-inositol-4,5-bisphosphate) + ADP + H(+). It carries out the reaction 1-octadecanoyl-2-(9Z)-octadecenoyl-sn-glycero-3-phospho-1D-myo-inositol 4-phosphate + ATP = 1-octadecanoyl-2-(9Z)-octadecenoyl-sn-glycero-3-phospho-1D-myo-inositol 4,5-bisphosphate + ADP + H(+). The catalysed reaction is 1-octadecanoyl-2-(9Z)-octadecenoyl-sn-glycero-3-phospho-1D-myo-inositol + ATP = 1-octadecanoyl-2-(9Z)-octadecenoyl-sn-glycero-3-phospho-1D-myo-inositol 5-phosphate + ADP + H(+). The enzyme catalyses 1-octadecanoyl-2-(9Z,12Z)-octadecadienoyl-sn-glycero-3-phospho-1D-myo-inositol + ATP = 1-octadecanoyl-2-(9Z,12Z)-octadecadienoyl-sn-glycero-3-phospho-1D-myo-inositol 5-phosphate + ADP + H(+). It catalyses the reaction 1-octadecanoyl-2-(5Z,8Z,11Z,14Z-eicosatetraenoyl)-sn-glycero-3-phospho-(1D-myo-inositol) + ATP = 1-octadecanoyl-2-(5Z,8Z,11Z,14Z)-eicosatetraenoyl-sn-glycero-3-phospho-1D-myo-inositol 5-phosphate + ADP + H(+). It carries out the reaction 1,2-di-(9Z,12Z)-octadecadienoyl-sn-glycero-3-phospho-1D-myo-inositol + ATP = 1,2-di(9Z,12Z)-octadecadienoyl-sn-glycero-3-phospho-1D-myo-inositol 5-phosphate + ADP + H(+). Its function is as follows. Catalyzes the phosphorylation of phosphatidylinositol 4-phosphate (PtdIns(4)P/PI4P) to form phosphatidylinositol 4,5-bisphosphate (PtdIns(4,5)P2/PIP2), a lipid second messenger that regulates several cellular processes such as signal transduction, vesicle trafficking, actin cytoskeleton dynamics, cell adhesion, and cell motility. PtdIns(4,5)P2 can directly act as a second messenger or can be utilized as a precursor to generate other second messengers: inositol 1,4,5-trisphosphate (IP3), diacylglycerol (DAG) or phosphatidylinositol-3,4,5-trisphosphate (PtdIns(3,4,5)P3/PIP3). PIP5K1A-mediated phosphorylation of PtdIns(4)P is the predominant pathway for PtdIns(4,5)P2 synthesis. Can also use phosphatidylinositol (PtdIns) as substrate in vitro. Together with PIP5K1C, is required for phagocytosis, both enzymes regulating different types of actin remodeling at sequential steps. Promotes particle ingestion by activating the WAS GTPase-binding protein that induces Arp2/3 dependent actin polymerization at the nascent phagocytic cup. Together with PIP5K1B, is required, after stimulation by G-protein coupled receptors, for the synthesis of IP3 that will induce stable platelet adhesion. Recruited to the plasma membrane by the E-cadherin/beta-catenin complex where it provides the substrate PtdIns(4,5)P2 for the production of PtdIns(3,4,5)P3, IP3 and DAG, that will mobilize internal calcium and drive keratinocyte differentiation. Positively regulates insulin-induced translocation of SLC2A4 to the cell membrane in adipocytes. Together with PIP5K1C has a role during embryogenesis. Independently of its catalytic activity, is required for membrane ruffling formation, actin organization and focal adhesion formation during directional cell migration by controlling integrin-induced translocation of the small GTPase RAC1 to the plasma membrane. Also functions in the nucleus where it acts as an activator of TUT1 adenylyltransferase activity in nuclear speckles, thereby regulating mRNA polyadenylation of a select set of mRNAs. In Rattus norvegicus (Rat), this protein is Phosphatidylinositol 4-phosphate 5-kinase type-1 alpha.